Here is a 78-residue protein sequence, read N- to C-terminus: MTTKMFSYVLLHSLMMFAIILSSMGSPEKYYDCKQDGCITTPPCWRKCVSMGYPKGGECRIYSYGGVCCCDLTSKPPN.

Positions 1-25 (MTTKMFSYVLLHSLMMFAIILSSMG) are cleaved as a signal peptide. Intrachain disulfides connect cysteine 33–cysteine 70, cysteine 38–cysteine 59, cysteine 44–cysteine 68, and cysteine 48–cysteine 69.

The protein belongs to the DEFL family.

The protein resides in the secreted. In Arabidopsis thaliana (Mouse-ear cress), this protein is Defensin-like protein 90.